The sequence spans 215 residues: Large ribosomal subunit protein uL4 (215 aa).

The disordered stretch occupies residues 46-72; it reads TAKSKNRAEVSGGGRKPWAQKGGGRAR. The segment covering 56–71 has biased composition (gly residues); that stretch reads SGGGRKPWAQKGGGRA.

It belongs to the universal ribosomal protein uL4 family. In terms of assembly, part of the 50S ribosomal subunit.

Functionally, one of the primary rRNA binding proteins, this protein initially binds near the 5'-end of the 23S rRNA. It is important during the early stages of 50S assembly. It makes multiple contacts with different domains of the 23S rRNA in the assembled 50S subunit and ribosome. Its function is as follows. Forms part of the polypeptide exit tunnel. In Helicobacter pylori (strain Shi470), this protein is Large ribosomal subunit protein uL4.